We begin with the raw amino-acid sequence, 292 residues long: Ribosomal RNA small subunit methyltransferase H (292 aa).

S-adenosyl-L-methionine is bound by residues 32-34 (GGH), Asp51, Leu87, Asp101, and Gln108.

Belongs to the methyltransferase superfamily. RsmH family.

It localises to the cytoplasm. It catalyses the reaction cytidine(1402) in 16S rRNA + S-adenosyl-L-methionine = N(4)-methylcytidine(1402) in 16S rRNA + S-adenosyl-L-homocysteine + H(+). In terms of biological role, specifically methylates the N4 position of cytidine in position 1402 (C1402) of 16S rRNA. This Pseudothermotoga lettingae (strain ATCC BAA-301 / DSM 14385 / NBRC 107922 / TMO) (Thermotoga lettingae) protein is Ribosomal RNA small subunit methyltransferase H.